The primary structure comprises 393 residues: MSCSQNKTSVSLAWRECISIASVLIGAYASYKYYKLFKTRDIPRPKEGVEELIGNTPLVKIRSLTKATGVNIYAKLELCNPAGSAKDRVALNIIKTAEELGELVRGEPGWVFEGTSGSTGISIAVVCNALGYRAHISLPDDTSLEKLALLESLGATVNKVKPASIVDPNQYVNAAKKACNELKKSGNGIRAVFADQFENEANWKVHYQTTGPEIAHQTKGNIDAFIAGCGTGGTITGVAKFLKERAKIPCHVVLADPQGSGFYNRVNYGVMYDYVEKEGTRRRHQVDTIVEGIGLNRITHNFHMGEKFIDESIRVNDNQAIRMAKYLSVNDGLFVGSSTAINAVAAIQVAKTLPHGSNIVIIACDSGSRHLSKFWKEAKEIDHDVSLEEVINI.

The chain crosses the membrane as a helical span at residues leucine 12–tyrosine 31. The residue at position 86 (lysine 86) is an N6-(pyridoxal phosphate)lysine. Residues glycine 230–threonine 234 and serine 338 each bind pyridoxal 5'-phosphate.

Belongs to the cysteine synthase/cystathionine beta-synthase family. It depends on pyridoxal 5'-phosphate as a cofactor.

Its subcellular location is the mitochondrion. The protein resides in the mitochondrion outer membrane. It catalyses the reaction O-acetyl-L-serine + hydrogen sulfide = L-cysteine + acetate. Its function is as follows. Putative cysteine synthase that catalyzes the conversion of O-acetyl-L-serine (OAS) into cysteine, the last step in the cysteine biosynthesis pathway. However, this CS-like protein is unlikely to function in cysteine biosynthesis. It seems that in S.cerevisiae cysteine biosynthesis occurs exclusively through the cystathionine pathway and not via direct incorporation of sulfur into OAS. In Saccharomyces cerevisiae (strain ATCC 204508 / S288c) (Baker's yeast), this protein is Putative mitochondrial cysteine synthase.